Reading from the N-terminus, the 186-residue chain is C-type lectin 37Da (186 aa).

The first 20 residues, M1–G20, serve as a signal peptide directing secretion. N-linked (GlcNAc...) asparagine glycans are attached at residues N35 and N47. Residues I46–K169 form the C-type lectin domain. C140 and C160 are disulfide-bonded.

The protein localises to the secreted. Functionally, galactose-specific lectin that displays calcium-dependent activity. Binds to the surface of hemocytes and enhances hemocyte encapsulation and melanization. This is likely by interacting with carbohydrates on the surface of the hemocytes. Also displays agglutination activity against the Gram-negative bacterium E.coli. The chain is C-type lectin 37Da from Drosophila melanogaster (Fruit fly).